The primary structure comprises 225 residues: 3-dehydroquinate dehydratase (225 aa).

Residues 30–32 and arginine 62 contribute to the 3-dehydroquinate site; that span reads EWR. The active-site Proton donor/acceptor is histidine 118. The Schiff-base intermediate with substrate role is filled by lysine 143. 3 residues coordinate 3-dehydroquinate: arginine 186, serine 205, and glutamine 209.

Belongs to the type-I 3-dehydroquinase family. As to quaternary structure, homodimer.

It catalyses the reaction 3-dehydroquinate = 3-dehydroshikimate + H2O. It participates in metabolic intermediate biosynthesis; chorismate biosynthesis; chorismate from D-erythrose 4-phosphate and phosphoenolpyruvate: step 3/7. Its function is as follows. Involved in the third step of the chorismate pathway, which leads to the biosynthesis of aromatic amino acids. Catalyzes the cis-dehydration of 3-dehydroquinate (DHQ) and introduces the first double bond of the aromatic ring to yield 3-dehydroshikimate. The sequence is that of 3-dehydroquinate dehydratase from Streptococcus thermophilus (strain ATCC BAA-250 / LMG 18311).